The following is a 360-amino-acid chain: MAKQVLILPGDGIGPEIVAQARNVLDVVNNKFSLGLTFTEGLVGGAAIDTTGVPFPEETLATAEAADAILLGAVGGPKWDKLDMAIRPEKGLLGLRSGLELFANLRPAILYPQLAEASSLRPEVVAGLDILIVRELTGGIYFGKPRGVRTLENGEREGFNTYVYSESEIRRIGRVAFEAAQKRNKRLCSVDKANVLEVTVLWREVMDELAKEYPDVELSHMYVDNAAMQLVRAPKQFDVIVTGNMFGDILSDEAAMLTGSIGMLPSASLNAAGKGMYEPCHGSAPDIAGQNMANPLATILSAAMMLRYSLAAEDAAAAIEQAVSDVLDQGLRTRDIAGSSGESVSTQAMGEAVARVLADR.

Gly-76–Glu-89 is an NAD(+) binding site. Positions 96, 106, 134, and 224 each coordinate substrate. Mg(2+)-binding residues include Asp-224, Asp-248, and Asp-252. Gly-282–Asn-294 contributes to the NAD(+) binding site.

The protein belongs to the isocitrate and isopropylmalate dehydrogenases family. LeuB type 1 subfamily. Homodimer. Mg(2+) is required as a cofactor. Requires Mn(2+) as cofactor.

The protein localises to the cytoplasm. The catalysed reaction is (2R,3S)-3-isopropylmalate + NAD(+) = 4-methyl-2-oxopentanoate + CO2 + NADH. It participates in amino-acid biosynthesis; L-leucine biosynthesis; L-leucine from 3-methyl-2-oxobutanoate: step 3/4. Catalyzes the oxidation of 3-carboxy-2-hydroxy-4-methylpentanoate (3-isopropylmalate) to 3-carboxy-4-methyl-2-oxopentanoate. The product decarboxylates to 4-methyl-2 oxopentanoate. The protein is 3-isopropylmalate dehydrogenase of Hahella chejuensis (strain KCTC 2396).